We begin with the raw amino-acid sequence, 108 residues long: Peptidyl-prolyl cis-trans isomerase FKBP1A (108 aa).

Phosphoserine is present on Ser10. The PPIase FKBP-type domain maps to 20-108 (GQTCVVHYTG…VFDVELLKLE (89 aa)). Lys53 carries the post-translational modification N6-acetyllysine; alternate. The residue at position 53 (Lys53) is an N6-succinyllysine; alternate.

The protein belongs to the FKBP-type PPIase family. FKBP1 subfamily. As to quaternary structure, interacts with TGFBR1; prevents TGFBR1 phosphorylation by TGFBR2 and stabilizes it in the inactive conformation. Interacts with ACVR1B and SMAD7. Identified in a complex composed of RYR1, PDE4D, PKA, FKBP1A and protein phosphatase 1 (PP1). Interacts directly with RYR2. Interacts directly with RYR3. Interacts directly with RYR1. Interacts with GLMN; rapamycin and FK506 abolish the interaction with GLMN in a dose dependent manner. In terms of tissue distribution, ubiquitous.

It is found in the cytoplasm. Its subcellular location is the cytosol. The protein resides in the sarcoplasmic reticulum membrane. The catalysed reaction is [protein]-peptidylproline (omega=180) = [protein]-peptidylproline (omega=0). Inhibited by both FK506 and rapamycin. Functionally, keeps in an inactive conformation TGFBR1, the TGF-beta type I serine/threonine kinase receptor, preventing TGF-beta receptor activation in absence of ligand. Recruits SMAD7 to ACVR1B which prevents the association of SMAD2 and SMAD3 with the activin receptor complex, thereby blocking the activin signal. May modulate the RYR1 calcium channel activity. PPIases accelerate the folding of proteins. It catalyzes the cis-trans isomerization of proline imidic peptide bonds in oligopeptides. This Rattus norvegicus (Rat) protein is Peptidyl-prolyl cis-trans isomerase FKBP1A (Fkbp1a).